We begin with the raw amino-acid sequence, 257 residues long: Enterotoxin type A (257 aa).

Positions 1–27 are cleaved as a signal peptide; it reads MKKTAFILLLFIALTWTTSPLVNGSEK. An intrachain disulfide couples C120 to C130. Zn(2+)-binding residues include H211, H249, and D251.

This sequence belongs to the staphylococcal/streptococcal toxin family. In terms of assembly, monomer. Interacts with MHC class II molecules alpha/HLA-DRB1 and beta/HLA-DRA chains. The interaction with MHC-II molecules occurs at both zinc-dependent and zinc-independent sites. Interacts with T-cell receptor beta variable 7-9/TRBV7-9. It depends on Zn(2+) as a cofactor.

The protein resides in the secreted. Functionally, staphylococcal enterotoxin that activates the host immune system by binding as unprocessed molecules to major histocompatibility (MHC) complex class II and T-cell receptor (TCR) molecules. In turn, waves of cellular activation, cytokine production, and migration into the lung tissue and airways occur via alphabeta T-cells. Also causes the intoxication staphylococcal food poisoning syndrome. The illness is characterized by high fever, hypotension, diarrhea, shock, and in some cases death. This chain is Enterotoxin type A (sea), found in Staphylococcus aureus (strain Newman).